Here is a 449-residue protein sequence, read N- to C-terminus: 23S rRNA (uracil(1939)-C(5))-methyltransferase RlmD (449 aa).

One can recognise a TRAM domain in the interval 12–70; sequence SKQLSAKQSFSVHQLDHLGAGIAQHQGKVVFIPGALPNETVQAQLTEQKKNYARAKLIK. 4 residues coordinate [4Fe-4S] cluster: Cys83, Cys89, Cys92, and Cys170. S-adenosyl-L-methionine contacts are provided by Gln282, Phe311, Asn316, Glu332, Asp359, and Asp379. The active-site Nucleophile is Cys405.

The protein belongs to the class I-like SAM-binding methyltransferase superfamily. RNA M5U methyltransferase family. RlmD subfamily.

The enzyme catalyses uridine(1939) in 23S rRNA + S-adenosyl-L-methionine = 5-methyluridine(1939) in 23S rRNA + S-adenosyl-L-homocysteine + H(+). Catalyzes the formation of 5-methyl-uridine at position 1939 (m5U1939) in 23S rRNA. The sequence is that of 23S rRNA (uracil(1939)-C(5))-methyltransferase RlmD from Shewanella sp. (strain ANA-3).